The following is a 483-amino-acid chain: Aspartyl/glutamyl-tRNA(Asn/Gln) amidotransferase subunit B (483 aa).

Belongs to the GatB/GatE family. GatB subfamily. As to quaternary structure, heterotrimer of A, B and C subunits.

It catalyses the reaction L-glutamyl-tRNA(Gln) + L-glutamine + ATP + H2O = L-glutaminyl-tRNA(Gln) + L-glutamate + ADP + phosphate + H(+). It carries out the reaction L-aspartyl-tRNA(Asn) + L-glutamine + ATP + H2O = L-asparaginyl-tRNA(Asn) + L-glutamate + ADP + phosphate + 2 H(+). Functionally, allows the formation of correctly charged Asn-tRNA(Asn) or Gln-tRNA(Gln) through the transamidation of misacylated Asp-tRNA(Asn) or Glu-tRNA(Gln) in organisms which lack either or both of asparaginyl-tRNA or glutaminyl-tRNA synthetases. The reaction takes place in the presence of glutamine and ATP through an activated phospho-Asp-tRNA(Asn) or phospho-Glu-tRNA(Gln). This Brachyspira hyodysenteriae (strain ATCC 49526 / WA1) protein is Aspartyl/glutamyl-tRNA(Asn/Gln) amidotransferase subunit B.